The chain runs to 241 residues: Proteasome subunit beta type-1 (241 aa).

Met1 is subject to N-acetylmethionine. A propeptide spanning residues 1–28 (MLSSTAMYSAPGRDLGMEPHRAAGPLQL) is cleaved from the precursor. O-linked (GlcNAc) serine glycosylation occurs at Ser58. Ser62 and Ser68 each carry phosphoserine. Tyr150 is modified (phosphotyrosine). Ser162 carries the post-translational modification Phosphoserine. Residue Lys204 is modified to N6-acetyllysine. O-linked (GlcNAc) serine glycosylation is present at Ser209.

This sequence belongs to the peptidase T1B family. In terms of assembly, the 26S proteasome consists of a 20S proteasome core and two 19S regulatory subunits. The 20S proteasome core is a barrel-shaped complex made of 28 subunits that are arranged in four stacked rings. The two outer rings are each formed by seven alpha subunits, and the two inner rings are formed by seven beta subunits. The proteolytic activity is exerted by three beta-subunits PSMB5, PSMB6 and PSMB7. Interacts with SERPINB2. Interacts with RFPL4A. As to quaternary structure, (Microbial infection) Interacts with HIV-1 protein Tat.

It localises to the cytoplasm. The protein resides in the nucleus. Functionally, non-catalytic component of the 20S core proteasome complex involved in the proteolytic degradation of most intracellular proteins. This complex plays numerous essential roles within the cell by associating with different regulatory particles. Associated with two 19S regulatory particles, forms the 26S proteasome and thus participates in the ATP-dependent degradation of ubiquitinated proteins. The 26S proteasome plays a key role in the maintenance of protein homeostasis by removing misfolded or damaged proteins that could impair cellular functions, and by removing proteins whose functions are no longer required. Associated with the PA200 or PA28, the 20S proteasome mediates ubiquitin-independent protein degradation. This type of proteolysis is required in several pathways including spermatogenesis (20S-PA200 complex) or generation of a subset of MHC class I-presented antigenic peptides (20S-PA28 complex). The sequence is that of Proteasome subunit beta type-1 from Homo sapiens (Human).